A 1412-amino-acid polypeptide reads, in one-letter code: MKALLDLFKQVQQPEVFDAIKIGLASPDKIRSWSFGEVKKPETINYRTFKPERDGLFCAKIFGPIKDYECLCGKYKRLKHRGVICEKCGVEVTLAKVRRERMGHIELASPVAHIWFLKSLPSRLGMVLDMTLRDIERVLYFEAYVVIDPGMTPLKARQIMTEEDYYNKVEEYGDEFRAEMGAEGVRELLRAINIDEQVEMLRTELKNTGSEAKIKKYAKRLKVLEAFQRSGIKPDWMVLEVLPVLPPELRPLVPLDGGRFATSDLNDLYRRVINRNNRLKRLLELKAPEIIVRNEKRMLQEAVDSLLDNGRRGKAMTGANKRPLKSLADMIKGKGGRFRQNLLGKRVDYSGRSVIVVGPTLKLHQCGLPKLMALELFKPFIFNKLEVMGVATTIKAAKKEVENQTPVVWDILEEVIREHPVMLNRAPTLHRLGIQAFEPVLIEGKAIQLHPLVCAAFNADFDGDQMAVHVPLSLEAQMEARTLMLASNNILFPANGDPSIVPSQDIVLGLYYATREAVNAKGEGLTFTGVSEALRAYENKEVELASRVNVRITEMVHNEDKSDGAPAFVPKISLYATTVGRAILSEILPPGLPFSVLNKPLKKKEISRLINTAFRKCGLRETVIFADQLMQSGFRLATRAGISICVDDMLVPPQKETIVGDAAKKVKEYDRQYMSGLVTSQERYNNVVDIWSATSEAVGKAMMEQLSTEPVTDRDGNETRQESFNSIYMMADSGARGSAVQIRQLAGMRGLMAKPDGSIIETPITANFREGLNVLQYFISTHGARKGLADTALKTANSGYLTRRLVDVTQDLVVVEDDCGTSNGVAMKALVEGGEVVEALRDRILGRVTVADVVNPESQETLYETGTLLDEDAVEEIERLGIDEVRVRTPLTCETRYGLCAACYGRDLGRGSSVNVGEAVGVIAAQSIGEPGTQLTMRTFHIGGAASRAAVASSVEAKSNGTVRFTATMRYVTNAKGEQIVISRSGEAMITDDHGRERERHKVPYGATLLQLDGAQIKAGTQLATWDPMTRPIITEYGGTVKFENVEEGVTVAKQIDDVTGLSTLVVIDVKRRGSQASKTVRPQVKLLDANGEEVKIPNTEHSVQIGFQVGALITVKDGQQVQVGEVLARIPTESQKTRDITGGLPRVAELFEARSPKDAGILAEVTGTTSFGKDTKGKQRLVITDLEGNQHEFLIAKEKQVLVHDGQVVNKGEMIVDGPADPHDILRLQGVEALSRYIVDEVQDVYRLQGVKINDKHIEVIVRQMLRRVQITDNGDTRFIPGEQVERSDMLDENDRMIAEDKRPATYENVLLGITKASLSTDSFISAASFQETTRVLTEAAIMGKRDDLRGLKENVIVGRLIPAGTGLAFHKARKSKELSDRERFDQIAAEESFEFGTPETPAAEQQHSGE.

Zn(2+)-binding residues include Cys-70, Cys-72, Cys-85, and Cys-88. The Mg(2+) site is built by Asp-460, Asp-462, and Asp-464. Cys-819, Cys-893, Cys-900, and Cys-903 together coordinate Zn(2+). Residues 1391–1412 (AEESFEFGTPETPAAEQQHSGE) form a disordered region.

This sequence belongs to the RNA polymerase beta' chain family. As to quaternary structure, the RNAP catalytic core consists of 2 alpha, 1 beta, 1 beta' and 1 omega subunit. When a sigma factor is associated with the core the holoenzyme is formed, which can initiate transcription. Mg(2+) is required as a cofactor. Requires Zn(2+) as cofactor.

The catalysed reaction is RNA(n) + a ribonucleoside 5'-triphosphate = RNA(n+1) + diphosphate. DNA-dependent RNA polymerase catalyzes the transcription of DNA into RNA using the four ribonucleoside triphosphates as substrates. The protein is DNA-directed RNA polymerase subunit beta' of Paraburkholderia xenovorans (strain LB400).